A 684-amino-acid chain; its full sequence is Sorbicillinoid biosynthetic cluster transcription factor 2 (684 aa).

The interval 114–151 (ISSAPSLETPPESVAASPPTVDSIPVSHHVNEDPEAEP) is disordered.

It is found in the nucleus. In terms of biological role, transcription factor that acts in concert with sorR1 which is a transcriptional activator of the gene cluster that mediates the biosynthesis of sorbicillinoids, a diverse group of yellow secondary metabolites that restrict growth of competing pathogenic fungi but not of bacteria. The protein is Sorbicillinoid biosynthetic cluster transcription factor 2 of Penicillium rubens (strain ATCC 28089 / DSM 1075 / NRRL 1951 / Wisconsin 54-1255) (Penicillium chrysogenum).